A 194-amino-acid polypeptide reads, in one-letter code: 7-methyl-GTP pyrophosphatase (194 aa).

The active-site Proton acceptor is Asp69.

It belongs to the Maf family. YceF subfamily. A divalent metal cation is required as a cofactor.

The protein resides in the cytoplasm. The enzyme catalyses N(7)-methyl-GTP + H2O = N(7)-methyl-GMP + diphosphate + H(+). Its function is as follows. Nucleoside triphosphate pyrophosphatase that hydrolyzes 7-methyl-GTP (m(7)GTP). May have a dual role in cell division arrest and in preventing the incorporation of modified nucleotides into cellular nucleic acids. This Shigella boydii serotype 4 (strain Sb227) protein is 7-methyl-GTP pyrophosphatase (yceF1).